The primary structure comprises 104 residues: Alpha-amylase inhibitor HOE-467A (104 aa).

The signal sequence occupies residues 1-30 (MRVRALRLAALVGAGAALALSPLAAGPASA). Intrachain disulfides connect cysteine 41/cysteine 57 and cysteine 75/cysteine 103.

Inhibits mammalian alpha-amylases specifically but has no action on plant and microbial alpha-amylases. Forms a tight stoichiometric 1:1 complex with alpha-amylase. The chain is Alpha-amylase inhibitor HOE-467A from Streptomyces tendae.